Here is a 182-residue protein sequence, read N- to C-terminus: Isopentenyl-diphosphate Delta-isomerase (182 aa).

Mn(2+) contacts are provided by histidine 25 and histidine 32. One can recognise a Nudix hydrolase domain in the interval proline 30–methionine 164. Cysteine 67 is an active-site residue. Mn(2+) is bound at residue histidine 69. Glutamate 87 contacts Mg(2+). Residues glutamate 114 and glutamate 116 each coordinate Mn(2+). The active site involves glutamate 116.

This sequence belongs to the IPP isomerase type 1 family. As to quaternary structure, homodimer. It depends on Mg(2+) as a cofactor. Requires Mn(2+) as cofactor.

Its subcellular location is the cytoplasm. It catalyses the reaction isopentenyl diphosphate = dimethylallyl diphosphate. The protein operates within isoprenoid biosynthesis; dimethylallyl diphosphate biosynthesis; dimethylallyl diphosphate from isopentenyl diphosphate: step 1/1. In terms of biological role, catalyzes the 1,3-allylic rearrangement of the homoallylic substrate isopentenyl (IPP) to its highly electrophilic allylic isomer, dimethylallyl diphosphate (DMAPP). The protein is Isopentenyl-diphosphate Delta-isomerase of Salmonella arizonae (strain ATCC BAA-731 / CDC346-86 / RSK2980).